Reading from the N-terminus, the 104-residue chain is Large ribosomal subunit protein bL21 (104 aa).

The protein belongs to the bacterial ribosomal protein bL21 family. In terms of assembly, part of the 50S ribosomal subunit. Contacts protein L20.

Functionally, this protein binds to 23S rRNA in the presence of protein L20. The protein is Large ribosomal subunit protein bL21 of Allorhizobium ampelinum (strain ATCC BAA-846 / DSM 112012 / S4) (Agrobacterium vitis (strain S4)).